A 372-amino-acid polypeptide reads, in one-letter code: DNA damage-repair/toleration protein DRT100 (372 aa).

The first 26 residues, 1 to 26 (MRKLLASPFSSLLAVVFISVISVVRC), serve as a signal peptide directing secretion. LRR repeat units follow at residues 136-158 (SLRI…IGKL), 160-183 (KLAV…TSLI), 184-205 (ELKH…DFGS), 208-230 (MLSR…ISGM), 232-254 (RLAD…MGNM), 256-277 (VLSL…SLLS), 280-302 (GLDV…FGSK), 304-326 (YLVS…LSSA), and 328-350 (FVGH…FPFD).

Its function is as follows. This protein is able to complement bacterial recA mutations, but its native function in the plant is not known. The protein is DNA damage-repair/toleration protein DRT100 (DRT100) of Arabidopsis thaliana (Mouse-ear cress).